The sequence spans 203 residues: Large ribosomal subunit protein uL3 (203 aa).

Belongs to the universal ribosomal protein uL3 family. In terms of assembly, part of the 50S ribosomal subunit. Forms a cluster with proteins L14 and L19.

In terms of biological role, one of the primary rRNA binding proteins, it binds directly near the 3'-end of the 23S rRNA, where it nucleates assembly of the 50S subunit. This is Large ribosomal subunit protein uL3 from Christiangramia forsetii (strain DSM 17595 / CGMCC 1.15422 / KT0803) (Gramella forsetii).